The sequence spans 512 residues: Activin receptor type-2B (512 aa).

Residues methionine 1–alanine 24 form the signal peptide. The Extracellular portion of the chain corresponds to glutamate 25–asparagine 137. Intrachain disulfides connect cysteine 29/cysteine 59, cysteine 49/cysteine 77, cysteine 84/cysteine 103, cysteine 90/cysteine 102, and cysteine 104/cysteine 109. N-linked (GlcNAc...) asparagine glycosylation is found at asparagine 42 and asparagine 65. Residues isoleucine 138 to tryptophan 158 traverse the membrane as a helical segment. The Cytoplasmic segment spans residues methionine 159–isoleucine 512. One can recognise a Protein kinase domain in the interval leucine 190 to isoleucine 478. Residues lysine 196–valine 204 and lysine 217 each bind ATP. Aspartate 321 (proton acceptor) is an active-site residue.

Belongs to the protein kinase superfamily. TKL Ser/Thr protein kinase family. TGFB receptor subfamily. It depends on Mg(2+) as a cofactor. Mn(2+) serves as cofactor. As to expression, not expressed in hen anterior pituitary during the ovulatory cycle but expressed in the ovarian follicle.

The protein resides in the membrane. The catalysed reaction is L-threonyl-[receptor-protein] + ATP = O-phospho-L-threonyl-[receptor-protein] + ADP + H(+). The enzyme catalyses L-seryl-[receptor-protein] + ATP = O-phospho-L-seryl-[receptor-protein] + ADP + H(+). Functionally, on ligand binding, forms a receptor complex consisting of two type II and two type I transmembrane serine/threonine kinases. Type II receptors phosphorylate and activate type I receptors which autophosphorylate, then bind and activate SMAD transcriptional regulators. Receptor for activin A, activin B and inhibin A. May modulate neuropeptide expression in dorsal root ganglia (DRG) neurons and ovarian follicle development. The chain is Activin receptor type-2B (ACVR2B) from Gallus gallus (Chicken).